Reading from the N-terminus, the 392-residue chain is Stilbene synthase 2 (392 aa).

55-58 (KFNR) serves as a coordination point for substrate. Cys164 is an active-site residue. Substrate is bound by residues Leu267 and 305-307 (GGP).

The protein belongs to the thiolase-like superfamily. Chalcone/stilbene synthases family. Homodimer.

It localises to the cytoplasm. The catalysed reaction is 4-coumaroyl-CoA + 3 malonyl-CoA + 3 H(+) = trans-resveratrol + 4 CO2 + 4 CoA. The protein operates within phytoalexin biosynthesis; 3,4',5-trihydroxystilbene biosynthesis; 3,4',5-trihydroxystilbene from trans-4-coumarate: step 2/2. Functionally, mediates resistance to pathogens which are sensitive to stilbenes. The protein is Stilbene synthase 2 of Vitis vinifera (Grape).